The following is a 498-amino-acid chain: MASQGTKRSYEQMETGGERQDATEIRASVGRMIGGIGRFYIQMCTELKLSDYEGRLIQNSITIERMVLSAFDERRNKYLEEHPSAGKDPKKTGGPIYRRIDGKWMRELILYDKEEIRRVWRQANNGEDATAGLTHIMIWHSNLNDATYQRTRALVRTGMDPRMCSLMQGSTLPRRSGAAGAAVKGVGTIVMELIRMIKRGINDRNFWRGENGRRTRIAYERMCNILKGKFQTAAQRAMMDQVRESRNPGNAEIEDLIFLARSALILRGSVAHKSCLPACVYGLAVASGHDFEREGYSLVGIEPFKLLQNSQVFSLIRPNENPAHKSQLVWMACHSAAFEDLRVSGFIRGKRVVPRGKLSTRGVQIASNENVEAMDSSTLELRSRYWAIRTRSGGNTNQQKASAGQISVQPTFSVQRNLPFERATVMAAFVGNNEGRTSDMRTEIIRMMESAKPEDLSFQGRGVFELSDEKATNPIVPSFDMNNEGSYFFGDNAEEYDN.

Residues 1-18 (MASQGTKRSYEQMETGGE) carry the Unconventional nuclear localization signal motif. The interval 1–22 (MASQGTKRSYEQMETGGERQDA) is disordered. A compositionally biased stretch (basic and acidic residues) spans 8–22 (RSYEQMETGGERQDA). Positions 198–216 (KRGINDRNFWRGENGRRTR) match the Bipartite nuclear localization signal motif.

It belongs to the influenza viruses nucleoprotein family. In terms of assembly, homomultimerizes to form the nucleocapsid. May bind host exportin-1/XPO1. Binds to viral genomic RNA. Protein-RNA contacts are mediated by a combination of electrostatic interactions between positively charged residues and the phosphate backbone and planar interactions between aromatic side chains and bases. In terms of processing, late in virus-infected cells, may be cleaved from a 56-kDa protein to a 53-kDa protein by a cellular caspase. This cleavage might be a marker for the onset of apoptosis in infected cells or have a specific function in virus host interaction.

Its subcellular location is the virion. The protein localises to the host nucleus. Functionally, encapsidates the negative strand viral RNA, protecting it from nucleases. The encapsidated genomic RNA is termed the ribonucleoprotein (RNP) and serves as template for transcription and replication. The RNP needs to be localized in the host nucleus to start an infectious cycle, but is too large to diffuse through the nuclear pore complex. NP comprises at least 2 nuclear localization signals that are responsible for the active RNP import into the nucleus through cellular importin alpha/beta pathway. Later in the infection, nclear export of RNPs are mediated through viral proteins NEP interacting with M1 which binds nucleoproteins. It is possible that nucleoprotein binds directly host exportin-1/XPO1 and plays an active role in RNPs nuclear export. M1 interaction with RNP seems to hide nucleoprotein's nuclear localization signals. Soon after a virion infects a new cell, M1 dissociates from the RNP under acidification of the virion driven by M2 protein. Dissociation of M1 from RNP unmasks nucleoprotein's nuclear localization signals, targeting the RNP to the nucleus. In Aves (Human), this protein is Nucleoprotein.